Here is a 247-residue protein sequence, read N- to C-terminus: Aliphatic sulfonates import ATP-binding protein SsuB 2 (247 aa).

One can recognise an ABC transporter domain in the interval 28–242 (VSVRGLQRRY…ALRPILLEEL (215 aa)). 60–67 (GESGCGKT) lines the ATP pocket.

Belongs to the ABC transporter superfamily. Aliphatic sulfonates importer (TC 3.A.1.17.2) family. As to quaternary structure, the complex is composed of two ATP-binding proteins (SsuB), two transmembrane proteins (SsuC) and a solute-binding protein (SsuA).

Its subcellular location is the cell inner membrane. It carries out the reaction ATP + H2O + aliphatic sulfonate-[sulfonate-binding protein]Side 1 = ADP + phosphate + aliphatic sulfonateSide 2 + [sulfonate-binding protein]Side 1.. Its function is as follows. Part of the ABC transporter complex SsuABC involved in aliphatic sulfonates import. Responsible for energy coupling to the transport system. This Paraburkholderia xenovorans (strain LB400) protein is Aliphatic sulfonates import ATP-binding protein SsuB 2.